A 172-amino-acid chain; its full sequence is Bifunctional protein PyrR (172 aa).

Residues 90–102 (LVLVDDVLMSGRT) carry the PRPP-binding motif.

This sequence belongs to the purine/pyrimidine phosphoribosyltransferase family. PyrR subfamily.

It carries out the reaction UMP + diphosphate = 5-phospho-alpha-D-ribose 1-diphosphate + uracil. Regulates the transcription of the pyrimidine nucleotide (pyr) operon in response to exogenous pyrimidines. Functionally, also displays a weak uracil phosphoribosyltransferase activity which is not physiologically significant. The polypeptide is Bifunctional protein PyrR (Pseudomonas entomophila (strain L48)).